A 331-amino-acid polypeptide reads, in one-letter code: MKKWMTVCALCFVFFLLVSCQQKDAVPDTAKKLKAPLTGLKTEQKVTERRPVAVVVNNHPKARPQSGLSKADIVIEALAEGQITRFLAIFQSQMPETVGPVRSAREYFVTLSNGFDSIFVHHGWSPGAKKQLESGAADYMNGLDFDGSLFWRADFSKPPHNSYTSYDYIKKAAEQKGYKLKQETNPLLFQTSDAKPANESYNVRVDYGTNNVTNLVEYNYDKKAEFYTRSSDGVITTDRETGKPVAMQNIFIVEASHHIIDQDGRRDIDLESGGKGLLFQHGNVIETDWKQVNGRIVPVKDGKWLPFVPGKTWINIVPDLDAASISKGEGV.

Residues methionine 1–serine 19 form the signal peptide. Cysteine 20 is lipidated: N-palmitoyl cysteine. Cysteine 20 is lipidated: S-diacylglycerol cysteine. Threonine 97 is modified (phosphothreonine). Phosphoserine is present on serine 103.

As to quaternary structure, interacts with PcrA. The interaction is not essential for cell viability or repair of UV-induced lesions.

It localises to the cell membrane. In Bacillus subtilis (strain 168), this protein is Putative lipoprotein YerB (yerB).